The sequence spans 42 residues: uncharacterized protein (42 aa).

The protein resides in the cytoplasm. This is an uncharacterized protein from Escherichia coli (strain K12).